A 420-amino-acid polypeptide reads, in one-letter code: Inheritance of peroxisomes protein 1 (420 aa).

The span at 1–10 shows a compositional bias: basic and acidic residues; it reads MVLSRGETKK. Disordered regions lie at residues 1–75 and 273–309; these read MVLS…QRKR and SLSDKFKLPPTSDIEPPNTEIINNDDDNDDDDDNYDD. Residues 30 to 39 show a composition bias toward low complexity; it reads LKQSLKLSNN. The segment covering 45 to 56 has biased composition (polar residues); the sequence is DSTQHSNDTNKS. Serine 273 carries the phosphoserine modification. Acidic residues predominate over residues 295–309; it reads NNDDDNDDDDDNYDD.

It belongs to the INP1 family. Interacts with PEX25, PEX30 and VPS1.

It localises to the peroxisome membrane. Functionally, required for peroxisome inheritance. This is Inheritance of peroxisomes protein 1 (INP1) from Saccharomyces cerevisiae (strain ATCC 204508 / S288c) (Baker's yeast).